Reading from the N-terminus, the 471-residue chain is Ribonuclease 3 (471 aa).

The segment covering 1–10 (MGSKVAGKKK) has biased composition (basic residues). Disordered regions lie at residues 1–29 (MGSKVAGKKKTQNDNKLDNENGSQQRENI) and 168–189 (NLNEKEDEEEDEGEDSYDPTKA). Residues 20 to 29 (ENGSQQRENI) are compositionally biased toward polar residues. Residues 172-184 (KEDEEEDEGEDSY) show a composition bias toward acidic residues. The RNase III domain maps to 227 to 331 (LSGSEMINAH…YIGGLMEDDP (105 aa)). Residues 369–437 (NAKRQLYSLI…AENALRDKKM (69 aa)) enclose the DRBM domain. Residues 451 to 471 (SESVLKDPSQKNKKRKFSDTS) form a disordered region. The span at 461–471 (KNKKRKFSDTS) shows a compositional bias: basic residues.

The catalysed reaction is Endonucleolytic cleavage to 5'-phosphomonoester.. Functionally, dsRNA-specific nuclease that cleaves eukaryotic pre-ribosomal RNA at the U3 snoRNP-dependent A0 site in the 5'-external transcribed spacer (ETS) and in the 3'-ETS. In vitro, cleaves synthetic 5'-ETS RNA A0 site in the absence of snoRNA or other factors. Has an essential growth function in addition to pre-rRNA processing. The protein is Ribonuclease 3 (RNT1) of Saccharomyces cerevisiae (strain ATCC 204508 / S288c) (Baker's yeast).